We begin with the raw amino-acid sequence, 41 residues long: MEEQPECREEKRGSLHVWKSELVEVEDDVYLRHSSSLTYRL.

The interval 9 to 17 (EEKRGSLHV) is loss of recognition by cytotoxic T lymphocyte (CTL).

HB-1 forms a complex with MHC class I HLA-B44. As to expression, expressed in acute lymphoblastic leukemia B-cells and Epstein-Barr virus-transformed B-cells.

In terms of biological role, precursor of the histocomplatibility antigen HB-1. More generally, minor histocomplatibility antigens (mHags) refer to immunogenic peptide which, when complexed with MHC, can generate an immune response after recognition by specific T-cells. The peptides are derived from polymorphic intracellular proteins, which are cleaved by normal pathways of antigen processing. The binding of these peptides to MHC class I or class II molecules and its expression on the cell surface can stimulate T-cell responses and thereby trigger graft rejection or graft-versus-host disease (GVHD) after hematopoietic stem cell transplantation from HLA-identical sibling donor. GVHD is a frequent complication after bone marrow transplantation (BMT), due to mismatch of minor histocomplatibility antigen in HLA-matched sibling marrow transplants. HB-1 is presented on the cell surface by MHC class I HLA-B44. This complex specifically elicits donor-cytotoxic T lymphocyte (CTL) reactivity in B-cell acute lymphoblastic leukemia (B-ALL) after treatment by HLA-identical allogenic bone marrow transplantation (BMT). It induces cell recognition and lysis by CTL. However, HB-1 restricted expression in B-ALL cells and not in normal tissues may allow a specific CTL reactivity against B-ALL without the risk of evoking graft-versus-host disease. In Homo sapiens (Human), this protein is Minor histocompatibility protein HB-1 (HMHB1).